A 302-amino-acid chain; its full sequence is Aspartate carbamoyltransferase catalytic subunit (302 aa).

2 residues coordinate carbamoyl phosphate: arginine 54 and threonine 55. Position 82 (lysine 82) interacts with L-aspartate. Positions 104, 132, and 135 each coordinate carbamoyl phosphate. Arginine 165 and arginine 217 together coordinate L-aspartate. 2 residues coordinate carbamoyl phosphate: glycine 257 and proline 258.

The protein belongs to the aspartate/ornithine carbamoyltransferase superfamily. ATCase family. In terms of assembly, heterododecamer (2C3:3R2) of six catalytic PyrB chains organized as two trimers (C3), and six regulatory PyrI chains organized as three dimers (R2).

The enzyme catalyses carbamoyl phosphate + L-aspartate = N-carbamoyl-L-aspartate + phosphate + H(+). It participates in pyrimidine metabolism; UMP biosynthesis via de novo pathway; (S)-dihydroorotate from bicarbonate: step 2/3. Its function is as follows. Catalyzes the condensation of carbamoyl phosphate and aspartate to form carbamoyl aspartate and inorganic phosphate, the committed step in the de novo pyrimidine nucleotide biosynthesis pathway. The protein is Aspartate carbamoyltransferase catalytic subunit of Thermus thermophilus (strain ATCC BAA-163 / DSM 7039 / HB27).